An 864-amino-acid chain; its full sequence is Translation initiation factor IF-2 (864 aa).

Residues 140–171 (DSRSLNTKKENKLKISNKDEQNKKFNQHRESN) are compositionally biased toward basic and acidic residues. The disordered stretch occupies residues 140–179 (DSRSLNTKKENKLKISNKDEQNKKFNQHRESNSFDLNHKK). In terms of domain architecture, tr-type G spans 364-533 (IRAPVVTIMG…LLQAEMLELK (170 aa)). The G1 stretch occupies residues 373 to 380 (GHVDHGKT). Position 373–380 (373–380 (GHVDHGKT)) interacts with GTP. The G2 stretch occupies residues 398–402 (GITQN). Residues 419-422 (DTPG) are G3. Residues 419–423 (DTPGH) and 473–476 (NKID) each bind GTP. Residues 473 to 476 (NKID) are G4. The G5 stretch occupies residues 509 to 511 (SAK).

Belongs to the TRAFAC class translation factor GTPase superfamily. Classic translation factor GTPase family. IF-2 subfamily.

It localises to the cytoplasm. In terms of biological role, one of the essential components for the initiation of protein synthesis. Protects formylmethionyl-tRNA from spontaneous hydrolysis and promotes its binding to the 30S ribosomal subunits. Also involved in the hydrolysis of GTP during the formation of the 70S ribosomal complex. The protein is Translation initiation factor IF-2 of Buchnera aphidicola subsp. Acyrthosiphon pisum (strain 5A).